The chain runs to 289 residues: Diaminopimelate epimerase (289 aa).

Substrate is bound by residues Asn-11 and Asn-78. Cys-87 acts as the Proton donor in catalysis. Substrate is bound by residues 88–89, Asn-163, Asn-199, and 217–218; these read GN and ER. The active-site Proton acceptor is the Cys-226. Position 227-228 (227-228) interacts with substrate; the sequence is GT.

The protein belongs to the diaminopimelate epimerase family. In terms of assembly, homodimer.

It localises to the cytoplasm. The catalysed reaction is (2S,6S)-2,6-diaminopimelate = meso-2,6-diaminopimelate. The protein operates within amino-acid biosynthesis; L-lysine biosynthesis via DAP pathway; DL-2,6-diaminopimelate from LL-2,6-diaminopimelate: step 1/1. Catalyzes the stereoinversion of LL-2,6-diaminopimelate (L,L-DAP) to meso-diaminopimelate (meso-DAP), a precursor of L-lysine and an essential component of the bacterial peptidoglycan. The sequence is that of Diaminopimelate epimerase from Mycobacterium bovis (strain ATCC BAA-935 / AF2122/97).